The sequence spans 390 residues: Lissencephaly-1 homolog (390 aa).

In terms of domain architecture, LisH spans Gln-7–Glu-39. Residues Thr-54–Gly-80 are a coiled coil. WD repeat units lie at residues Gly-104 to Lys-145, Gly-146 to Lys-185, Gly-189 to Thr-228, Gly-231 to Tyr-270, Glu-272 to Thr-313, Ala-316 to Ala-355, and Ala-358 to Arg-390.

It belongs to the WD repeat LIS1/nudF family.

It is found in the cytoplasm. The protein resides in the cytoskeleton. Its subcellular location is the microtubule organizing center. The protein localises to the centrosome. Its function is as follows. Positively regulates the activity of the minus-end directed microtubule motor protein dynein. May enhance dynein-mediated microtubule sliding by targeting dynein to the microtubule plus end. Required for several dynein- and microtubule-dependent processes. The chain is Lissencephaly-1 homolog from Caenorhabditis briggsae.